We begin with the raw amino-acid sequence, 283 residues long: Phosphatidylserine decarboxylase proenzyme (283 aa).

Catalysis depends on charge relay system; for autoendoproteolytic cleavage activity residues Asp-90, His-143, and Ser-248. The active-site Schiff-base intermediate with substrate; via pyruvic acid; for decarboxylase activity is Ser-248. Ser-248 carries the pyruvic acid (Ser); by autocatalysis modification.

Belongs to the phosphatidylserine decarboxylase family. PSD-B subfamily. Prokaryotic type I sub-subfamily. Heterodimer of a large membrane-associated beta subunit and a small pyruvoyl-containing alpha subunit. It depends on pyruvate as a cofactor. In terms of processing, is synthesized initially as an inactive proenzyme. Formation of the active enzyme involves a self-maturation process in which the active site pyruvoyl group is generated from an internal serine residue via an autocatalytic post-translational modification. Two non-identical subunits are generated from the proenzyme in this reaction, and the pyruvate is formed at the N-terminus of the alpha chain, which is derived from the carboxyl end of the proenzyme. The autoendoproteolytic cleavage occurs by a canonical serine protease mechanism, in which the side chain hydroxyl group of the serine supplies its oxygen atom to form the C-terminus of the beta chain, while the remainder of the serine residue undergoes an oxidative deamination to produce ammonia and the pyruvoyl prosthetic group on the alpha chain. During this reaction, the Ser that is part of the protease active site of the proenzyme becomes the pyruvoyl prosthetic group, which constitutes an essential element of the active site of the mature decarboxylase.

The protein localises to the cell membrane. It catalyses the reaction a 1,2-diacyl-sn-glycero-3-phospho-L-serine + H(+) = a 1,2-diacyl-sn-glycero-3-phosphoethanolamine + CO2. The protein operates within phospholipid metabolism; phosphatidylethanolamine biosynthesis; phosphatidylethanolamine from CDP-diacylglycerol: step 2/2. In terms of biological role, catalyzes the formation of phosphatidylethanolamine (PtdEtn) from phosphatidylserine (PtdSer). The sequence is that of Phosphatidylserine decarboxylase proenzyme from Francisella tularensis subsp. holarctica (strain OSU18).